A 332-amino-acid chain; its full sequence is Ketol-acid reductoisomerase (NADP(+)) (332 aa).

One can recognise a KARI N-terminal Rossmann domain in the interval 1 to 182; sequence MAQTWKDTDI…GSARAGLIKT (182 aa). NADP(+)-binding positions include 25 to 28, Lys48, Ser53, and 83 to 86; these read YGIQ and DMIQ. The active site involves His108. Gly134 is an NADP(+) binding site. The KARI C-terminal knotted domain maps to 183–329; the sequence is AFKEEVETDW…KEMRKMMWPD (147 aa). Residues Asp191, Glu195, Glu227, and Glu231 each contribute to the Mg(2+) site. Substrate is bound at residue Ser252.

It belongs to the ketol-acid reductoisomerase family. Requires Mg(2+) as cofactor.

It carries out the reaction (2R)-2,3-dihydroxy-3-methylbutanoate + NADP(+) = (2S)-2-acetolactate + NADPH + H(+). The catalysed reaction is (2R,3R)-2,3-dihydroxy-3-methylpentanoate + NADP(+) = (S)-2-ethyl-2-hydroxy-3-oxobutanoate + NADPH + H(+). It functions in the pathway amino-acid biosynthesis; L-isoleucine biosynthesis; L-isoleucine from 2-oxobutanoate: step 2/4. Its pathway is amino-acid biosynthesis; L-valine biosynthesis; L-valine from pyruvate: step 2/4. Functionally, involved in the biosynthesis of branched-chain amino acids (BCAA). Catalyzes an alkyl-migration followed by a ketol-acid reduction of (S)-2-acetolactate (S2AL) to yield (R)-2,3-dihydroxy-isovalerate. In the isomerase reaction, S2AL is rearranged via a Mg-dependent methyl migration to produce 3-hydroxy-3-methyl-2-ketobutyrate (HMKB). In the reductase reaction, this 2-ketoacid undergoes a metal-dependent reduction by NADPH to yield (R)-2,3-dihydroxy-isovalerate. This Nitrosopumilus maritimus (strain SCM1) protein is Ketol-acid reductoisomerase (NADP(+)).